Consider the following 33-residue polypeptide: MLFTFAWASLAAIFTFSIAMVVWGRNGDGTIDF.

The chain crosses the membrane as a helical span at residues L2–V22.

Belongs to the PetN family. The 4 large subunits of the cytochrome b6-f complex are cytochrome b6, subunit IV (17 kDa polypeptide, PetD), cytochrome f and the Rieske protein, while the 4 small subunits are PetG, PetL, PetM and PetN. The complex functions as a dimer.

It localises to the cellular thylakoid membrane. Functionally, component of the cytochrome b6-f complex, which mediates electron transfer between photosystem II (PSII) and photosystem I (PSI), cyclic electron flow around PSI, and state transitions. The polypeptide is Cytochrome b6-f complex subunit 8 (Prochlorococcus marinus (strain MIT 9211)).